Consider the following 749-residue polypeptide: MTARPAVRQPAGLPCPQPCNRYGYPMTNALLAEIDALVAGTHHNPHALLGAHPGPEGVWVRALRPLARSVHVLLANGSRVELPHLHKGVFAGVVPGAEVPDYRLVVRYDDGTELTVDDPYRHLPTLGELDIHLIQEGRHEELWRVLGAHTKRFPSVLGDTEGTAFTVWAPNARGVRVIGDFNHWDGTGHPMRSLGSCGVWELFIPGVGDGTRYKYQVLGADGVWREKADPVAFATQAPPETASVVFTSRYTWQDDEWLTQRAAADLHRKPMSIYEVHLGSWRPGLSYRELADQLVDYVRELGFTHVEFLPVAEHPFGGSWGYQVTSYYAPTARFGSPDDFRYLVDRLHQAGIGVFLDWVPAHFPKDDWALSRFDGTALYEHPDPRRGIHPDWDTLIFNYGRTEVRNFLVANALFWLEEFHIDGLRVDAVASMLYLDYSRESGQWEPNAYGGRENLDAIDFLRELNATAYRRNPGIAMIAEESTAWPGVTRSTDTGGLGFGFKWNMGWMHDTLSYLQHDPVHRQYHHNEVTFSMVYAYSENYVLPLSHDEVVHGKRSLLYKMPGNEWQRCANLRALLAYMWAHPGKQLLFMGNEIAQGDEWSHDAGVQWWLLRYPHHAGMRRLVADLNRLYRNTRALWSQDTVPEGFTWLDGGDASGNTLSFLRWGDDGSVLACLVNFSGRPHPERRVGLPYAGRWREILNTDAVLYGGSGVSQPGIIEASEETPWQGQPASALVTYPPLGVSWLVFDGT.

The Nucleophile role is filled by Asp427. Glu480 acts as the Proton donor in catalysis.

This sequence belongs to the glycosyl hydrolase 13 family. GlgB subfamily. Monomer.

The enzyme catalyses Transfers a segment of a (1-&gt;4)-alpha-D-glucan chain to a primary hydroxy group in a similar glucan chain.. It functions in the pathway glycan biosynthesis; glycogen biosynthesis. Catalyzes the formation of the alpha-1,6-glucosidic linkages in glycogen by scission of a 1,4-alpha-linked oligosaccharide from growing alpha-1,4-glucan chains and the subsequent attachment of the oligosaccharide to the alpha-1,6 position. This is 1,4-alpha-glucan branching enzyme GlgB from Thermobifida fusca (strain YX).